The chain runs to 156 residues: Ribosomal RNA large subunit methyltransferase H (156 aa).

S-adenosyl-L-methionine-binding positions include L73, G104, and 123–128; that span reads LSPLTL.

This sequence belongs to the RNA methyltransferase RlmH family. As to quaternary structure, homodimer.

The protein resides in the cytoplasm. It carries out the reaction pseudouridine(1915) in 23S rRNA + S-adenosyl-L-methionine = N(3)-methylpseudouridine(1915) in 23S rRNA + S-adenosyl-L-homocysteine + H(+). Functionally, specifically methylates the pseudouridine at position 1915 (m3Psi1915) in 23S rRNA. This chain is Ribosomal RNA large subunit methyltransferase H, found in Yersinia pseudotuberculosis serotype O:1b (strain IP 31758).